Here is a 206-residue protein sequence, read N- to C-terminus: Thymidylate kinase (206 aa).

Residue 11 to 18 coordinates ATP; the sequence is GIDGAGKT.

Belongs to the thymidylate kinase family.

It catalyses the reaction dTMP + ATP = dTDP + ADP. In terms of biological role, phosphorylation of dTMP to form dTDP in both de novo and salvage pathways of dTTP synthesis. This chain is Thymidylate kinase, found in Burkholderia ambifaria (strain MC40-6).